Here is a 716-residue protein sequence, read N- to C-terminus: Amino-acid acetyltransferase, mitochondrial (716 aa).

The N-terminal 44 residues, 1–44, are a transit peptide targeting the mitochondrion; it reads MSPHTGWPRTVNSSLLKKHRSSLCTCQHTSSFLPRSFSTTADRH. 2 disordered regions span residues 99 to 119 and 487 to 508; these read YPKS…APTL and LSSS…TVYP. Residues 102–112 are compositionally biased toward basic and acidic residues; that stretch reads SPDENKPEPEK. Over residues 497 to 508 the composition is skewed to polar residues; the sequence is GPTNNGQGTVYP. An N-acetyltransferase domain is found at 537-706; it reads SRPRLKLDDP…YEAVCRSTQP (170 aa).

Belongs to the acetyltransferase family.

The protein resides in the mitochondrion. It carries out the reaction L-glutamate + acetyl-CoA = N-acetyl-L-glutamate + CoA + H(+). It functions in the pathway amino-acid biosynthesis; L-arginine biosynthesis; N(2)-acetyl-L-ornithine from L-glutamate: step 1/4. N-acetylglutamate synthase involved in arginine biosynthesis. This is Amino-acid acetyltransferase, mitochondrial (arg2) from Neosartorya fischeri (strain ATCC 1020 / DSM 3700 / CBS 544.65 / FGSC A1164 / JCM 1740 / NRRL 181 / WB 181) (Aspergillus fischerianus).